Consider the following 444-residue polypeptide: Methylenetetrahydrofolate--tRNA-(uracil-5-)-methyltransferase TrmFO (444 aa).

10–15 (GAGLAG) provides a ligand contact to FAD.

Belongs to the MnmG family. TrmFO subfamily. FAD is required as a cofactor.

It is found in the cytoplasm. The enzyme catalyses uridine(54) in tRNA + (6R)-5,10-methylene-5,6,7,8-tetrahydrofolate + NADH + H(+) = 5-methyluridine(54) in tRNA + (6S)-5,6,7,8-tetrahydrofolate + NAD(+). It carries out the reaction uridine(54) in tRNA + (6R)-5,10-methylene-5,6,7,8-tetrahydrofolate + NADPH + H(+) = 5-methyluridine(54) in tRNA + (6S)-5,6,7,8-tetrahydrofolate + NADP(+). Functionally, catalyzes the folate-dependent formation of 5-methyl-uridine at position 54 (M-5-U54) in all tRNAs. The sequence is that of Methylenetetrahydrofolate--tRNA-(uracil-5-)-methyltransferase TrmFO from Streptococcus equi subsp. zooepidemicus (strain H70).